The primary structure comprises 597 residues: Aspartate--tRNA(Asp/Asn) ligase (597 aa).

Residue glutamate 175 coordinates L-aspartate. The aspartate stretch occupies residues 199–202; sequence QLFK. L-aspartate is bound at residue arginine 221. ATP is bound by residues 221–223 and glutamine 230; that span reads RDE. Histidine 453 lines the L-aspartate pocket. Residue glutamate 487 participates in ATP binding. Residue arginine 494 coordinates L-aspartate. 539–542 lines the ATP pocket; sequence GWDR. The disordered stretch occupies residues 562–597; it reads SGGGVDPLTDAPAPITPEQRKESGIDAKPKKKETKN. A compositionally biased stretch (basic and acidic residues) spans 579-589; that stretch reads EQRKESGIDAK.

Belongs to the class-II aminoacyl-tRNA synthetase family. Type 1 subfamily. Homodimer.

The protein localises to the cytoplasm. The enzyme catalyses tRNA(Asx) + L-aspartate + ATP = L-aspartyl-tRNA(Asx) + AMP + diphosphate. Its function is as follows. Aspartyl-tRNA synthetase with relaxed tRNA specificity since it is able to aspartylate not only its cognate tRNA(Asp) but also tRNA(Asn). Reaction proceeds in two steps: L-aspartate is first activated by ATP to form Asp-AMP and then transferred to the acceptor end of tRNA(Asp/Asn). The chain is Aspartate--tRNA(Asp/Asn) ligase from Corynebacterium kroppenstedtii (strain DSM 44385 / JCM 11950 / CIP 105744 / CCUG 35717).